The following is a 66-amino-acid chain: UPF0434 protein M446_0487 (66 aa).

It belongs to the UPF0434 family.

The polypeptide is UPF0434 protein M446_0487 (Methylobacterium sp. (strain 4-46)).